We begin with the raw amino-acid sequence, 278 residues long: Transcriptional regulator ICP22 homolog (278 aa).

Disordered regions lie at residues 1–42 (MFCT…RDTS) and 154–229 (CDVS…KRPQ). Positions 1 to 142 (MFCTSPATRG…PRGEDGFIEA (142 aa)) are IE62-binding. 2 stretches are compositionally biased toward acidic residues: residues 155–169 (DVSD…DDDG) and 183–205 (AESS…DSCE).

This sequence belongs to the herpesviridae ICP22 family. As to quaternary structure, interacts with IE62; this interaction modulates the function of IE62. Interacts with several components of host pre-initiation complex including GTF2E1, GTF2H2 and POLR2A; these interactions lead to repression of gene transcription. Interacts with host ASF1A; altering its ability to bind histones. In terms of processing, phosphorylated in vitro by host and by protein kinase ORF47.

The protein resides in the host cytoplasm. Its subcellular location is the host nucleus. It is found in the virion tegument. Immediate early (EI) protein that functions as a transcriptional regulator of cellular and viral mRNAs mainly by interacting with several general transcription factors thereby disorganizing the preinitiation complex at certain promoters. May additionally help to regulate levels of histones in virus-infected cells by interacting with host ASF1. By inhibiting host transcriptional program, IE63 plays a major role in the ability of VZV to overcome the innate immune response to the virus. In Varicella-zoster virus (strain Dumas) (HHV-3), this protein is Transcriptional regulator ICP22 homolog.